The following is a 134-amino-acid chain: Large-conductance mechanosensitive channel (134 aa).

2 helical membrane-spanning segments follow: residues 15-35 and 80-100; these read IDLA…QSVV and GNFI…FLAV.

The protein belongs to the MscL family. As to quaternary structure, homopentamer.

Its subcellular location is the cell inner membrane. Functionally, channel that opens in response to stretch forces in the membrane lipid bilayer. May participate in the regulation of osmotic pressure changes within the cell. This is Large-conductance mechanosensitive channel from Methylocella silvestris (strain DSM 15510 / CIP 108128 / LMG 27833 / NCIMB 13906 / BL2).